Reading from the N-terminus, the 3008-residue chain is MSTNPKPQRKTKRNTNRRPMDVKFPGGGQIVGGVYLLPRRGPRLGVRATRKTSERSQPRGRRQPIPKARRPEGRSWAQPGYPWPLYGNEGCGWAGWLLSPRGSRPSWGPNDPRGRSRNLGKVIDTLTCGFADLMGYIPLVGAPVGSVARALAHGVRALEDGINYATGNLPGCSFSIFLLALLSCLTVPASAVNYRNVSGIYHVTNDCPNSSIVYEADHHIMHLPGCVPCVREGNQSRCWVALTPTVAAPYIGAPLESLRSHVDLMVGAATVCSGLYIGDLCGGLFLVGQMFSFRPRRHWTTQDCNCSIYTGHITGHRMAWDMMMNWSPTTTLVLAQVMRIPTTLVDLLSGGHWGVLVGVAYFSMQANWAKVILVLFLFAGVDAETHVSGAAVGRSTAGLANLFSSGSKQNLQLINSNGSWHINRTALNCNDSLNTGFLASLFYTHKFNSSGCSERLACCKSLDSYGQGWGPLGVANISGSSDDRPYCWHYAPRPCGIVPASSVCGPVYCFTPSPVVVGTTDHVGVPTYTWGENETDVFLLNSTRPPHGAWFGCVWMNSTGFTKTCGAPPCEVNTNNGTWHCPTDCFRKHPETTYAKCGSGPWITPRCLIDYPYRLWHFPCTANFSVFNIRTFVGGIEHRMQAACNWTRGEVCGLEHRDRVELSPLLLTTTAWQILPCSFTTLPALSTGLIHLHQNIVDVQYLYGVGSAVVSWALKWEYVVLAFLLLADARVSAYLWMMFMVSQVEAALSNLININAASAAGAQGFWYAILFICIVWHVKGRFPAAAAYAACGLWPCFLLLLMLPERAYAYDQEVAGSLGGAIVVMLTILTLSPHYKLWLARGLWWIQYFIARTEAVLHVYIPSFNVRGPRDSVIVLAVLVCPDLVFDITKYLLAILGPLHILQASLLRIPYFVRAQALVKICSLLRGVVYGKYFQMVVLKSRGLTGTYIYDHLTPMSDWPPYGLRDLAVALEPVVFTPMEKKVIVWGADTAACGDIIRGLPVSARLGNEILLGPADTETSKGWRLLAPITAYAQQTRGLFSTIVTSLTGRDTNENCGEVQVLSTATQSFLGTAVNGVMWTVYHGAGAKTISGPKGPVNQMYTNVDQDLVGWPAPPGVRSLAPCTCGSADLYLVTRHADVIPVRRRGDTRGALLSPRPISILKGSSGGPLLCPMGHRAGIFRAAVCTRGVAKAVDFVPVESLETTMRSPVFTDNSTPPAVPQTYQVAHLHAPTGSGKSTKVPAAHAAQGYKVLVLNPSVAATLGFGVYMSKAYGIDPNIRSGVRTITTGAPITYSTYGKFLADGGCSGGAYDIIICDECYSTDSTTILGIGTVLDQAETAGVRLTVLATATPPGSVTTPHSNIEEVALPTTGEIPFYGKAIPLELIKGGRHLIFCHSKKKCDELARQLTSLGLNAVAYYRGLDVSVIPTSGDVVVCATDALMTGFTGDFDSVIDCNTSVIQTVDFSLDPTFSIEITTVPQDAVSRSQRRGRTGRGRLGTYRYVTPGERPSGMFDTAELCECYDAGCAWYELTPAETTTRLKAYFDTPGLPVCQDHLEFWESVFTGLTHIDGHFLSQTKQSGENFPYLVAYQATVSAKVWLAPPSWDTMWKCLIRLKPTLHGPTPLLYRLGSVQNEVVLTHPITKYIMACMSADLEVVTSTWVLVGGVLAALAAYCLSVGSVVIVGRVVLSGQPAVIPDREVLYQQFDEMEECSKHLPLVEHGLQLAEQFKQKALGLLNFAGKQAQEATPVIQSNFAKLEQFWANDMWNFISGIQYLAGLSTLPGNPAIASLMSFTAAVTSPLTTQQTLLFNILGGWVASQIRDSDASTAFVVSGLAGAAVGSVGLGKILVDILPGYGAGVRGAVVTFKIMSGEMPSTEDLVNLLPAILSPGALVVEVVCPAILRRHVGPGEGAVQWMNRLIAFASRGNHVSPTHYVPESDAARRVTTILSSLTVTSLLRRLHKWINEDCSTPCAESWLWEVWDWVLHVLSDFKTCLKAKFVPLMPGIPLLSWPRGYKGEWRGDGVMHTTCPCGADLAGHIKNGSMRITGPKTCSNTWHGTFPINAYTTGPGVPIPAPNYKFALWRVSAEDYVEVRRVGDFHYVTGVTQDNIKFPCQVPAPELFTEVDGIRIHRHAPKCKPLLRDEVSFSVGLNSFVVGSQLPCEPEPDVAVLTSMLTDPSHITAESARRRLARGSRPSLASSSASQLSPRLLQATCTAPHDSPGTDLLEANLLWGSTATRVETDEKVIILDSFESCVAEQNDDREVSVAAEILRPTKKFPPALPIWARPDYNPPLTETWKQQDYQAPTVHGCALPPAKQPPVPSPRRKRTVQLTESVVSTALAELAAKTFGQSEPSSDRDTDLTTPTETTDSGPIVVDDASDDGSYSSMPPLEGEPGDPDLTSDSWSTVSGSEDVVCCSMSYSWTGALVTPCAAEESKLPISPLSNSLLRHHNMVYATTTRSAVTRQKKVTFDRLQVVDSTYNEVLKEIKARASRVKPRLLTTEEACDLTPPHSARSKFGYGKKDVRSHSRKAINHISSVWKDLLDDNNTPIPTTIMAKNEVFAVNPAKGGRKPARLIVYPDLGSRVCEKRALHDVIKKTALAVMGAAYGFQYSPAQRVEFLLTAWKSKNDPMGFSYDTRCFDSTVTEKDIRVEEEVYQCCDLEPEARKVITALTDRLYVGGPMHNSKGDLCGYRRCRATGVYTTSFGNTLTCYLKATAAIRAAALRDCTMLVCGDDLVVIAESDGVEEDNRALRAFTEAMTRYSAPPGDAPQPAYDLELITSCSSNVSVAHDVTGKKVYYLTRDPETPLARAVWETVRHTPVNSWLGNIIVYAPTIWVRMILMTHFFSILQSQEALEKALDFDMYGVTYSITPLDLPAIIQRLHGLSAFTLHGYSPHELNRVAGALRKLGVPPLRAWRHRARAVRAKLIAQGGRAKICGIYLFNWAVKTKLKLTPLPAAAKLDLSGWFTVGAGGGDIYHSMSHARPRYLLLCLLILTVGVGIFLLPAR.

Serine 2 carries the N-acetylserine; by host modification. An interaction with STAT1 region spans residues serine 2–lysine 23. Positions serine 2–proline 58 are interaction with EIF2AK2/PKR. Residues serine 2 to arginine 59 form an interaction with DDX3X region. The tract at residues serine 2–serine 75 is disordered. Residues serine 2–asparagine 168 are Cytoplasmic-facing. Short sequence motifs (nuclear localization signal) lie at residues proline 5–arginine 13 and proline 38–arginine 43. Over residues proline 7–asparagine 16 the composition is skewed to basic residues. A compositionally biased stretch (low complexity) spans glycine 32–arginine 47. Serine 53 bears the Phosphoserine; by host mark. 2 short sequence motifs (nuclear localization signal) span residues proline 58 to proline 64 and proline 66 to proline 71. Positions proline 58–alanine 68 are enriched in basic residues. Phosphoserine; by host occurs at positions 99 and 116. The segment at proline 112–alanine 152 is important for endoplasmic reticulum and mitochondrial localization. The segment at valine 122 to serine 173 is interaction with APOA2. Residues tyrosine 164–glycine 167 form an important for lipid droplets localization region. Residues leucine 169–alanine 189 form a helical membrane-spanning segment. The propeptide at leucine 178 to alanine 191 is ER anchor for the core protein, removed in mature form by host signal peptidase. Residues serine 190–glycine 358 lie on the Lumenal side of the membrane. N-linked (GlcNAc...) asparagine; by host glycans are attached at residues asparagine 196, asparagine 209, and asparagine 234. Residues methionine 265 to arginine 296 are important for fusion. N-linked (GlcNAc...) asparagine; by host glycosylation occurs at asparagine 305. The chain crosses the membrane as a helical span at residues valine 359–alanine 379. The Lumenal segment spans residues glycine 380–leucine 725. The tract at residues threonine 385–glutamine 412 is HVR1. N-linked (GlcNAc...) (high mannose) asparagine; by host glycosylation is found at asparagine 417, asparagine 423, and asparagine 430. Disulfide bonds link cysteine 429–cysteine 553, cysteine 452–cysteine 459, cysteine 487–cysteine 495, and cysteine 504–cysteine 509. The N-linked (GlcNAc...) asparagine; by host glycan is linked to asparagine 448. The tract at residues alanine 475–glycine 479 is HVR2. The N-linked (GlcNAc...) asparagine; by host glycan is linked to asparagine 476. The interval serine 481–proline 494 is CD81-binding 1. N-linked (GlcNAc...) asparagine; by host glycosylation occurs at asparagine 533. The tract at residues proline 545–glycine 552 is CD81-binding 2. Asparagine 557 is a glycosylation site (N-linked (GlcNAc...) asparagine; by host). Cystine bridges form between cysteine 565-cysteine 570, cysteine 581-cysteine 585, cysteine 597-cysteine 620, and cysteine 607-cysteine 644. 2 N-linked (GlcNAc...) (high mannose) asparagine; by host glycosylation sites follow: asparagine 623 and asparagine 645. A disulfide bridge links cysteine 652 with cysteine 677. The tract at residues valine 660–alanine 671 is PKR/eIF2-alpha phosphorylation homology domain (PePHD). The helical transmembrane segment at leucine 726–alanine 746 threads the bilayer. Over alanine 747–alanine 757 the chain is Lumenal. The chain crosses the membrane as a helical span at residues serine 758–valine 778. Residues lysine 779–phenylalanine 782 lie on the Cytoplasmic side of the membrane. The chain crosses the membrane as a helical span at residues proline 783–leucine 803. Over proline 804 to glutamate 813 the chain is Lumenal. A helical membrane pass occupies residues valine 814–histidine 834. The Cytoplasmic portion of the chain corresponds to tyrosine 835–cysteine 881. The chain crosses the membrane as a helical span at residues proline 882–leucine 902. At glutamine 903–valine 928 the chain is on the lumenal side. Residues glutamine 903 to leucine 1026 form the Peptidase C18 domain. A protease NS2-3 region spans residues alanine 904 to arginine 1206. Cysteine 922 carries S-palmitoyl cysteine; by host lipidation. A helical membrane pass occupies residues valine 929–isoleucine 949. The tract at residues valine 929–isoleucine 949 is interaction with host SCPS1. The Cytoplasmic segment spans residues tyrosine 950–threonine 1657. Active-site for protease NS2 activity; shared with dimeric partner residues include histidine 952, glutamate 972, and cysteine 993. Residues alanine 1027–proline 1208 form the Peptidase S29 domain. Catalysis depends on charge relay system; for serine protease NS3 activity residues histidine 1083 and aspartate 1107. Residues cysteine 1123 and cysteine 1125 each coordinate Zn(2+). The active-site Charge relay system; for serine protease NS3 activity is the serine 1165. 2 residues coordinate Zn(2+): cysteine 1171 and histidine 1175. Residues proline 1217–threonine 1369 form the Helicase ATP-binding domain. Residue alanine 1230–serine 1237 coordinates ATP. Mg(2+)-binding residues include serine 1237 and glutamate 1317. The short motif at aspartate 1316–tyrosine 1319 is the DECH box element. Positions glutamine 1486–threonine 1498 are RNA-binding. The helical transmembrane segment at serine 1658 to glycine 1678 threads the bilayer. Residues serine 1679–glycine 1690 are NS3-binding. Topologically, residues serine 1679–glutamine 1805 are cytoplasmic. The chain crosses the membrane as a helical span at residues threonine 1806 to serine 1826. Topologically, residues threonine 1827 to alanine 1828 are lumenal. A helical transmembrane segment spans residues phenylalanine 1829 to valine 1849. Position 1850 (aspartate 1850) is a topological domain, cytoplasmic. The chain crosses the membrane as a helical span at residues isoleucine 1851–glycine 1871. Over glutamate 1872–asparagine 1881 the chain is Lumenal. A helical transmembrane segment spans residues leucine 1882–leucine 1902. Topologically, residues arginine 1903–cysteine 1972 are cytoplasmic. Cysteine 1972 carries the S-palmitoyl cysteine; by host lipid modification. The stretch at alanine 1973–leucine 2002 is an intramembrane region. The Cytoplasmic portion of the chain corresponds to methionine 2003 to arginine 2987. Cysteine 2029, cysteine 2031, and cysteine 2052 together coordinate Zn(2+). An FKBP8-binding region spans residues glutamate 2120–proline 2208. A transcriptional activation region spans residues glutamate 2120–threonine 2329. Residues proline 2135–proline 2139 form an interaction with non-structural protein 4A region. Residues arginine 2189–glutamate 2435 form an interaction with host SKP2 region. Serine 2194, serine 2197, serine 2201, serine 2204, and serine 2207 each carry phosphoserine; by host. Residues leucine 2210–lysine 2245 are ISDR. The interval leucine 2210 to leucine 2272 is interaction with EIF2AK2/PKR. An NS4B-binding region spans residues lysine 2245–tyrosine 2303. Positions glutamate 2296–proline 2373 are V3. Residues proline 2319–proline 2322 carry the SH3-binding motif. Positions proline 2324 to leucine 2332 match the Nuclear localization signal motif. The disordered stretch occupies residues alanine 2346 to serine 2406. Lysine 2347 is covalently cross-linked (Glycyl lysine isopeptide (Lys-Gly) (interchain with G-Cter in ubiquitin)). Phosphoserine; by host is present on serine 2446. The RdRp catalytic domain maps to proline 2631–aspartate 2749. Mg(2+) contacts are provided by aspartate 2637, aspartate 2735, and aspartate 2736. Residues tyrosine 2988 to arginine 3008 form a helical membrane-spanning segment.

It belongs to the hepacivirus polyprotein family. Homooligomer. Interacts with E1 (via C-terminus). Interacts with the non-structural protein 5A. Interacts (via N-terminus) with host STAT1 (via SH2 domain); this interaction results in decreased STAT1 phosphorylation and ubiquitin-mediated proteasome-dependent STAT1 degradation, leading to decreased IFN-stimulated gene transcription. Interacts with host STAT3; this interaction constitutively activates STAT3. Interacts with host LTBR receptor. Interacts with host TNFRSF1A receptor and possibly induces apoptosis. Interacts with host HNRPK. Interacts with host YWHAE. Interacts with host UBE3A/E6AP. Interacts with host DDX3X. Interacts with host APOA2. Interacts with host RXRA protein. Interacts with host SP110 isoform 3/Sp110b; this interaction sequesters the transcriptional corepressor SP110 away from the nucleus. Interacts with host CREB3 nuclear transcription protein; this interaction triggers cell transformation. Interacts with host ACY3. Interacts with host C1QR1. Interacts with host RBM24; this interaction, which enhances the interaction of the mature core protein with 5'-UTR, may inhibit viral translation and favor replication. Interacts with host EIF2AK2/PKR; this interaction induces the autophosphorylation of EIF2AK2. Part of the viral assembly initiation complex composed of NS2, E1, E2, NS3, NS4A, NS5A and the mature core protein. In terms of assembly, forms a heterodimer with envelope glycoprotein E2. Interacts with mature core protein. Interacts with protease NS2. The heterodimer E1/E2 interacts with host CLDN1; this interaction plays a role in viral entry into host cell. Interacts with host SPSB2 (via C-terminus). Part of the viral assembly initiation complex composed of NS2, E1, E2, NS3, NS4A, NS5A and the mature core protein. Interacts with host NEURL3; this interaction prevents E1 binding to glycoprotein E2. As to quaternary structure, forms a heterodimer with envelope glycoprotein E1. Interacts with host CD81 and SCARB1 receptors; these interactions play a role in viral entry into host cell. Interacts with host EIF2AK2/PKR; this interaction inhibits EIF2AK2 and probably allows the virus to evade the innate immune response. Interacts with host CD209/DC-SIGN and CLEC4M/DC-SIGNR. Interact with host SPCS1; this interaction is essential for viral particle assembly. Interacts with protease NS2. The heterodimer E1/E2 interacts with host CLDN1; this interaction plays a role in viral entry into host cell. Part of the viral assembly initiation complex composed of NS2, E1, E2, NS3, NS4A, NS5A and the mature core protein. Interacts with host SLC3A2/4F2hc; the interaction may facilitate viral entry into host cell. Interacts with human PLSCR1. Homohexamer. Homoheptamer. Interacts with protease NS2. In terms of assembly, homodimer. Interacts with host SPCS1; this interaction is essential for viral particle assembly. Interacts with envelope glycoprotein E1. Interacts with envelope glycoprotein E2. Interacts with viroporin p7. Interacts with serine protease/helicase NS3. Part of the replication complex composed of NS2, NS3, NS4A, NS4B, NS5A and the RNA-directed RNA polymerase embedded in an ER-derived membranous web. Part of the viral assembly initiation complex composed of NS2, E1, E2, NS3, NS4A, NS5A and the mature core protein. As to quaternary structure, interacts with protease NS2. Interacts with non-structural protein 4A; this interaction stabilizes the folding of NS3 serine protease. NS3-NS4A interaction is essential for NS3 activation and allows membrane anchorage of the latter. NS3/NS4A complex also prevents phosphorylation of host IRF3, thus preventing the establishment of dsRNA induced antiviral state. Interacts with host MAVS; this interaction leads to the cleavage and inhibition of host MAVS. Interacts with host TICAM1; this interaction leads to the cleavage and inhibition of host TICAM1. Interacts with host TANK-binding kinase/TBK1; this interaction results in the inhibition of the association between TBK1 and IRF3, which leads to the inhibition of IRF3 activation. Interacts with host RBM24. Part of the replication complex composed of NS2, NS3, NS4A, NS4B, NS5A and the RNA-directed RNA polymerase embedded in an ER-derived membranous web. Part of the viral assembly initiation complex composed of NS2, E1, E2, NS3, NS4A, NS5A and the mature core protein. Interacts with NS3 serine protease; this interaction stabilizes the folding of NS3 serine protease. NS3-NS4A interaction is essential for NS3 activation and allows membrane anchorage of the latter. Interacts with non-structural protein 5A (via N-terminus). Part of the replication complex composed of NS2, NS3, NS4A, NS4B, NS5A and the RNA-directed RNA polymerase embedded in an ER-derived membranous web. Part of the viral assembly initiation complex composed of NS2, E1, E2, NS3, NS4A, NS5A and the mature core protein. In terms of assembly, homomultimer. Interacts with non-structural protein NS5A. Interacts with host PLA2G4C; this interaction likely initiates the recruitment of replication complexes to lipid droplets. Interacts with host STING; this interaction disrupts the interaction between STING and TBK1 thereby suppressing the interferon signaling. Part of the replication complex composed of NS2, NS3, NS4A, NS4B, NS5A and the RNA-directed RNA polymerase embedded in an ER-derived membranous web. As to quaternary structure, monomer. Homodimer; dimerization is required for RNA-binding. Interacts with the mature core protein. Interacts (via N-terminus) with non-structural protein 4A. Interacts with non-structural protein 4B. Interacts (via region D2) with RNA-directed RNA polymerase. Part of the viral assembly initiation complex composed of NS2, E1, E2, NS3, NS4A, NS5A and the mature core protein. Part of the replication complex composed of NS2, NS3, NS4A, NS4B, NS5A and the RNA-directed RNA polymerase embedded in an ER-derived membranous web. Interacts with host GRB2. Interacts with host BIN1. Interacts with host PIK3R1. Interacts with host SRCAP. Interacts with host FKBP8. Interacts (via C-terminus) with host VAPB (via MSP domain). Interacts with host EIF2AK2/PKR; this interaction leads to disruption of EIF2AK2 dimerization by NS5A and probably allows the virus to evade the innate immune response. Interacts (via N-terminus) with host PACSIN2 (via N-terminus); this interaction attenuates protein kinase C alpha-mediated phosphorylation of PACSIN2 by disrupting the interaction between PACSIN2 and PRKCA. Interacts (via N-terminus) with host SRC kinase (via SH2 domain). Interacts with most Src-family kinases. Interacts with host IFI27 and SKP2; promotes the ubiquitin-mediated proteasomal degradation of NS5A. Interacts with host GPS2. Interacts with host TNFRSF21; this interaction allows the modulation by the virus of JNK, p38 MAPK, STAT3, and Akt signaling pathways in a DR6-dependent manner. Interacts (via N-terminus) with host CIDEB (via N-terminus); this interaction seems to regulate the association of HCV particles with APOE. Interacts with host CHKA/Choline Kinase-alpha; CHKA bridges host PI4KA and NS5A and potentiates NS5A-stimulated PI4KA activity, which then facilitates the targeting of the ternary complex to the ER for viral replication. Interacts with host SPSB2 (via C-terminus); this interaction targets NS5A for ubiquitination and degradation. Interacts with host RAB18; this interaction may promote the association of NS5A and other replicase components with lipid droplets. Interacts (via region D2) with host PPIA/CYPA; the interaction stimulates RNA-binding ability of NS5A and is dependent on the peptidyl-prolyl cis-trans isomerase activity of PPIA/CYPA. Interacts with host TRIM14; this interaction induces the degradation of NS5A. Homooligomer. Interacts with non-structural protein 5A. Interacts with host VAPB. Interacts with host PRK2/PKN2. Interacts with host HNRNPA1 and SEPT6; these interactions facilitate viral replication. Part of the replication complex composed of NS2, NS3, NS4A, NS4B, NS5A and the RNA-directed RNA polymerase. It depends on Zn(2+) as a cofactor. The cofactor is Mg(2+). Specific enzymatic cleavages in vivo yield mature proteins. The structural proteins, core, E1, E2 and p7 are produced by proteolytic processing by host signal peptidases. The core protein precursor is synthesized as a 23 kDa, which is retained in the ER membrane through the hydrophobic signal peptide. Cleavage by the signal peptidase releases the 21 kDa mature core protein. The cleavage of the core protein precursor occurs between aminoacids 176 and 188 but the exact cleavage site is not known. Some degraded forms of the core protein appear as well during the course of infection. The other proteins (p7, NS2, NS3, NS4A, NS4B, NS5A and NS5B) are cleaved by the viral proteases. Autoprocessing between NS2 and NS3 is mediated by the NS2 cysteine protease catalytic domain and regulated by the NS3 N-terminal domain. In terms of processing, phosphorylated by host PKC and PKA. Post-translationally, ubiquitinated; mediated by UBE3A and leading to core protein subsequent proteasomal degradation. Highly N-glycosylated. In terms of processing, palmitoylation is required for NS2/3 autoprocessing and E2 recruitment to membranes. Post-translationally, palmitoylated. This modification may play a role in its polymerization or in protein-protein interactions. Phosphorylated on serines in a basal form termed p56. p58 is a hyperphosphorylated form of p56. p56 and p58 coexist in the cell in roughly equivalent amounts. Hyperphosphorylation is dependent on the presence of NS4A. Host CSNK1A1/CKI-alpha or RPS6KB1 kinases may be responsible for NS5A phosphorylation. In terms of processing, tyrosine phosphorylation is essential for the interaction with host SRC. Post-translationally, the N-terminus is phosphorylated by host PRK2/PKN2.

Its subcellular location is the host endoplasmic reticulum membrane. The protein resides in the host mitochondrion membrane. The protein localises to the virion. It is found in the host cytoplasm. It localises to the host nucleus. Its subcellular location is the host lipid droplet. The protein resides in the virion membrane. The protein localises to the host mitochondrion. It is found in the host cell membrane. It localises to the host perinuclear region. The enzyme catalyses Hydrolysis of four peptide bonds in the viral precursor polyprotein, commonly with Asp or Glu in the P6 position, Cys or Thr in P1 and Ser or Ala in P1'.. It catalyses the reaction a ribonucleoside 5'-triphosphate + H2O = a ribonucleoside 5'-diphosphate + phosphate + H(+). The catalysed reaction is ATP + H2O = ADP + phosphate + H(+). It carries out the reaction RNA(n) + a ribonucleoside 5'-triphosphate = RNA(n+1) + diphosphate. Inhibited by the antiviral drug hexamethylene amiloride. Inhibition by amantadine appears to be genotype-dependent. Also inhibited by long-alkyl-chain iminosugar derivatives. With respect to regulation, activity is up-regulated by PRK2/PKN2-mediated phosphorylation. Its function is as follows. Packages viral RNA to form a viral nucleocapsid, and promotes virion budding. Participates in the viral particle production as a result of its interaction with the non-structural protein 5A. Binds RNA and may function as a RNA chaperone to induce the RNA structural rearrangements taking place during virus replication. Modulates viral translation initiation by interacting with viral IRES and 40S ribosomal subunit. Affects various cell signaling pathways, host immunity and lipid metabolism. Prevents the establishment of cellular antiviral state by blocking the interferon-alpha/beta (IFN-alpha/beta) and IFN-gamma signaling pathways and by blocking the formation of phosphorylated STAT1 and promoting ubiquitin-mediated proteasome-dependent degradation of STAT1. Activates STAT3 leading to cellular transformation. Regulates the activity of cellular genes, including c-myc and c-fos. May repress the promoter of p53, and sequester CREB3 and SP110 isoform 3/Sp110b in the cytoplasm. Represses cell cycle negative regulating factor CDKN1A, thereby interrupting an important check point of normal cell cycle regulation. Targets transcription factors involved in the regulation of inflammatory responses and in the immune response: suppresses TNF-induced NF-kappa-B activation, and activates AP-1. Binds to dendritic cells (DCs) via C1QR1, resulting in down-regulation of T-lymphocytes proliferation. Alters lipid metabolism by interacting with hepatocellular proteins involved in lipid accumulation and storage. Induces up-regulation of FAS promoter activity, and thereby contributes to the increased triglyceride accumulation in hepatocytes (steatosis). Forms a heterodimer with envelope glycoprotein E2, which mediates virus attachment to the host cell, virion internalization through clathrin-dependent endocytosis and fusion with host membrane. Fusion with the host cell is most likely mediated by both E1 and E2, through conformational rearrangements of the heterodimer required for fusion rather than a classical class II fusion mechanism. E1/E2 heterodimer binds host apolipoproteins such as APOB and ApoE thereby forming a lipo-viro-particle (LVP). APOE associated to the LVP allows the initial virus attachment to cell surface receptors such as the heparan sulfate proteoglycans (HSPGs), syndecan-1 (SDC1), syndecan-1 (SDC2), the low-density lipoprotein receptor (LDLR) and scavenger receptor class B type I (SCARB1). The cholesterol transfer activity of SCARB1 allows E2 exposure and binding of E2 to SCARB1 and the tetraspanin CD81. E1/E2 heterodimer binding on CD81 activates the epithelial growth factor receptor (EGFR) signaling pathway. Diffusion of the complex E1-E2-EGFR-SCARB1-CD81 to the cell lateral membrane allows further interaction with Claudin 1 (CLDN1) and occludin (OCLN) to finally trigger HCV entry. In terms of biological role, forms a heterodimer with envelope glycoprotein E1, which mediates virus attachment to the host cell, virion internalization through clathrin-dependent endocytosis and fusion with host membrane. Fusion with the host cell is most likely mediated by both E1 and E2, through conformational rearrangements of the heterodimer required for fusion rather than a classical class II fusion mechanism. The interaction between envelope glycoprotein E2 and host apolipoprotein E/APOE allows the proper assembly, maturation and infectivity of the viral particles. This interaction is probably promoted via the up-regulation of cellular autophagy by the virus. E1/E2 heterodimer binds host apolipoproteins such as APOB and APOE thereby forming a lipo-viro-particle (LVP). APOE associated to the LVP allows the initial virus attachment to cell surface receptors such as the heparan sulfate proteoglycans (HSPGs), syndecan-1 (SDC1), syndecan-1 (SDC2), the low-density lipoprotein receptor (LDLR) and scavenger receptor class B type I (SCARB1). The cholesterol transfer activity of SCARB1 allows E2 exposure and binding of E2 to SCARB1 and the tetraspanin CD81. E1/E2 heterodimer binding on CD81 activates the epithelial growth factor receptor (EGFR) signaling pathway. Diffusion of the complex E1-E2-EGFR-SCARB1-CD81 to the cell lateral membrane allows further interaction with Claudin 1 (CLDN1) and occludin (OCLN) to finally trigger HCV entry. Inhibits host EIF2AK2/PKR activation, preventing the establishment of an antiviral state. Viral ligand for CD209/DC-SIGN and CLEC4M/DC-SIGNR, which are respectively found on dendritic cells (DCs), and on liver sinusoidal endothelial cells and macrophage-like cells of lymph node sinuses. These interactions allow the capture of circulating HCV particles by these cells and subsequent facilitated transmission to permissive cells such as hepatocytes and lymphocyte subpopulations. The interaction between E2 and host amino acid transporter complex formed by SLC3A2 and SLC7A5/LAT1 may facilitate viral entry into host cell. Functionally, ion channel protein that acts as a viroporin and plays an essential role in the assembly, envelopment and secretion of viral particles. Regulates the host cell secretory pathway, which induces the intracellular retention of viral glycoproteins and favors assembly of viral particles. Creates a pore in acidic organelles and releases Ca(2+) and H(+) in the cytoplasm of infected cells, leading to a productive viral infection. High levels of cytoplasmic Ca(2+) may trigger membrane trafficking and transport of viral ER-associated proteins to viroplasms, sites of viral genome replication. This ionic imbalance induces the assembly of the inflammasome complex, which triggers the maturation of pro-IL-1beta into IL-1beta through the action of caspase-1. Targets also host mitochondria and induces mitochondrial depolarization. In addition of its role as a viroporin, acts as a lipid raft adhesion factor. Its function is as follows. Cysteine protease required for the proteolytic auto-cleavage between the non-structural proteins NS2 and NS3. The N-terminus of NS3 is required for the function of NS2 protease (active region NS2-3). Promotes the initiation of viral particle assembly by mediating the interaction between structural and non-structural proteins. Displays three enzymatic activities: serine protease with a chymotrypsin-like fold, NTPase and RNA helicase. NS3 serine protease, in association with NS4A, is responsible for the cleavages of NS3-NS4A, NS4A-NS4B, NS4B-NS5A and NS5A-NS5B. The NS3/NS4A complex prevents phosphorylation of host IRF3, thus preventing the establishment of dsRNA induced antiviral state. The NS3/NS4A complex induces host amino acid transporter component SLC3A2, thus contributing to HCV propagation. NS3 RNA helicase binds to RNA and unwinds both dsDNA and dsRNA in the 3' to 5' direction, and likely resolves RNA complicated stable secondary structures in the template strand. Binds a single ATP and catalyzes the unzipping of a single base pair of dsRNA. Inhibits host antiviral proteins TBK1 and IRF3 thereby preventing the establishment of an antiviral state. Cleaves host MAVS/CARDIF thereby preventing the establishment of an antiviral state. Cleaves host TICAM1/TRIF, thereby disrupting TLR3 signaling and preventing the establishment of an antiviral state. In terms of biological role, induces a specific membrane alteration that serves as a scaffold for the virus replication complex. This membrane alteration gives rise to the so-called ER-derived membranous web that contains the replication complex. NS4B self-interaction contributes to its function in membranous web formation. Promotes host TRIF protein degradation in a CASP8-dependent manner thereby inhibiting host TLR3-mediated interferon signaling. Disrupts the interaction between STING and TBK1 contributing to the inhibition of interferon signaling. Functionally, phosphorylated protein that is indispensable for viral replication and assembly. Both hypo- and hyperphosphorylated states are required for the viral life cycle. The hyperphosphorylated form of NS5A is an inhibitor of viral replication. Involved in RNA-binding and especially in binding to the viral genome. Zinc is essential for RNA-binding. Participates in the viral particle production as a result of its interaction with the mature viral core protein. Its interaction with host VAPB may target the viral replication complex to vesicles. Down-regulates viral IRES translation initiation. Mediates interferon resistance, presumably by interacting with and inhibiting host EIF2AK2/PKR. Prevents BIN1-induced apoptosis. Acts as a transcriptional activator of some host genes important for viral replication when localized in the nucleus. Via the interaction with host PACSIN2, modulates lipid droplet formation in order to promote virion assembly. Modulates TNFRSF21/DR6 signaling pathway for viral propagation. Its function is as follows. RNA-dependent RNA polymerase that performs primer-template recognition and RNA synthesis during viral replication. Initiates RNA transcription/replication at a flavin adenine dinucleotide (FAD), resulting in a 5'- FAD cap on viral RNAs. In this way, recognition of viral 5' RNA by host pattern recognition receptors can be bypassed, thereby evading activation of antiviral pathways. This is Genome polyprotein from Homo sapiens (Human).